We begin with the raw amino-acid sequence, 374 residues long: MIDPWDVEEVDYERLTEEFGIRPIDEKVRELLPRRFPLLDRGIVFGHRDYDSFLKDYNDGKLVSVLSGMMPSGRMHLGHKTVVDQLVFYQQEMDVKVYVPIADLEAHHARNMDLDRAHRIAVEEYVLNYAALGLDLDPDRCEIYLQSERKTVQRMALLLAGRLTWNTVKNTYGFTGETNMGHAFAPIVQAADILHPQEIEGPHRVLVPVGVDQDPHLRLTRDIAEKEDLIKPASTYHRFMTGLTGGKMSSSKPNTAIFLTDDPETAKEKVWNAKTGGGATLEEHREHGGNPDECVVYELMVYHLADRIGGDEKLREIRKKCREGDIICGECKRMVGEALAEILEELERRREDVRDELPDLLSQHPDAPEVPEDW.

The 'HIGH' region signature appears at 71–79 (PSGRMHLGH). Residues 247 to 251 (KMSSS) carry the 'KMSKS' region motif.

This sequence belongs to the class-I aminoacyl-tRNA synthetase family.

The protein localises to the cytoplasm. The enzyme catalyses tRNA(Trp) + L-tryptophan + ATP = L-tryptophyl-tRNA(Trp) + AMP + diphosphate + H(+). In Methanopyrus kandleri (strain AV19 / DSM 6324 / JCM 9639 / NBRC 100938), this protein is Tryptophan--tRNA ligase.